The sequence spans 1447 residues: DNA topoisomerase 2 (1447 aa).

ATP is bound by residues Asn-72, Asn-101, 129-131 (SSN), and 142-149 (GRNGYGAK). The tract at residues 323 to 325 (KKK) is interaction with DNA. An ATP-binding site is contributed by 357–359 (QTK). One can recognise a Toprim domain in the interval 435–552 (CTLILTEGDS…ELLRLPFLEE (118 aa)). Positions 441, 521, and 523 each coordinate Mg(2+). The 475-residue stretch at 695–1169 (IPSLVDGLKP…TPEMLWLDDL (475 aa)) folds into the Topo IIA-type catalytic domain. Tyr-785 functions as the O-(5'-phospho-DNA)-tyrosine intermediate in the catalytic mechanism. An interaction with DNA region spans residues 972–981 (KLTTTLSTNQ). Disordered stretches follow at residues 1079–1110 (EDAE…EVDP), 1183–1231 (ERAE…DGEP), and 1246–1447 (AAAK…DFNC). Over residues 1081–1094 (AEQADEEDEEEEEA) the composition is skewed to acidic residues. The span at 1255 to 1281 (KEPKKPKEPKEPKVKKEPKGKQIKAEP) shows a compositional bias: basic and acidic residues. Over residues 1283–1293 (ASGDEVDEFDA) the composition is skewed to acidic residues. Ser-1284 bears the Phosphoserine mark. 2 stretches are compositionally biased toward basic and acidic residues: residues 1310 to 1325 (VKKE…KKEN) and 1332 to 1359 (SKID…ERPG). Phosphoserine is present on Ser-1344. Thr-1352 bears the Phosphothreonine mark. Residues Ser-1374, Ser-1385, Ser-1392, and Ser-1396 each carry the phosphoserine modification. Acidic residues predominate over residues 1374–1394 (SDEEEDGGNVGSDDDGNASDD). The span at 1395–1408 (DSPKRPAKRGREDE) shows a compositional bias: basic and acidic residues. Over residues 1413 to 1423 (AKKKAPPKKRR) the composition is skewed to basic residues. Residues 1427-1447 (ESDDDDIEIDEDDDDDSDFNC) show a composition bias toward acidic residues.

Belongs to the type II topoisomerase family. As to quaternary structure, homodimer. Interacts with mod(mdg4). Interacts with barr. Interacts with ph-p. Interacts with mle; the interaction mediates association with the MSL dosage compensation complex. It depends on Mg(2+) as a cofactor. The cofactor is Mn(2+). Ca(2+) is required as a cofactor. In terms of processing, phosphorylated. Phosphorylation by casein kinase II enhances ATPase activity.

It is found in the nucleus. The protein localises to the chromosome. Its subcellular location is the cytoplasm. The catalysed reaction is ATP-dependent breakage, passage and rejoining of double-stranded DNA.. In terms of biological role, control of topological states of DNA by transient breakage and subsequent rejoining of DNA strands. Topoisomerase II makes double-strand breaks. Essential during mitosis and meiosis for proper segregation of daughter chromosomes. During meiosis, it disrupts heterochromatic connections between achiasmate and chiasmate homologs after spindle assembly so that chromosomes can separate at prometaphase I. During mitosis, it functions in the separation of sister chromatids by establishing amphitelic kinetochore attachments in mitotic spindles. May have a role in chromatin condensation and chromosome structure. May be involved in X-chromosome dosage compensation, perhaps by modifying the topological state of compensated genes. Regulates activity of the gypsy chromatin insulator complex by binding to mod(mdg4) and preventing its degradation. This chain is DNA topoisomerase 2, found in Drosophila melanogaster (Fruit fly).